Reading from the N-terminus, the 567-residue chain is Proline--tRNA ligase (567 aa).

The protein belongs to the class-II aminoacyl-tRNA synthetase family. ProS type 1 subfamily. As to quaternary structure, homodimer.

Its subcellular location is the cytoplasm. It catalyses the reaction tRNA(Pro) + L-proline + ATP = L-prolyl-tRNA(Pro) + AMP + diphosphate. Its function is as follows. Catalyzes the attachment of proline to tRNA(Pro) in a two-step reaction: proline is first activated by ATP to form Pro-AMP and then transferred to the acceptor end of tRNA(Pro). As ProRS can inadvertently accommodate and process non-cognate amino acids such as alanine and cysteine, to avoid such errors it has two additional distinct editing activities against alanine. One activity is designated as 'pretransfer' editing and involves the tRNA(Pro)-independent hydrolysis of activated Ala-AMP. The other activity is designated 'posttransfer' editing and involves deacylation of mischarged Ala-tRNA(Pro). The misacylated Cys-tRNA(Pro) is not edited by ProRS. This Geobacillus kaustophilus (strain HTA426) protein is Proline--tRNA ligase.